Reading from the N-terminus, the 1531-residue chain is Lysophospholipase nte1 (1531 aa).

Residues 1-72 lie on the Cytoplasmic side of the membrane; it reads MATGDGIIAA…TPPAPSTMVG (72 aa). Residues 73-93 form a helical membrane-spanning segment; that stretch reads WIGWIFSFIFQVIPSVLYWIV. Residues 94–115 are Lumenal-facing; that stretch reads TFTTITLPTWLFTLFSMSLTFT. The helical transmembrane segment at 116-136 threads the bilayer; sequence MNFTTLLLIALAVVSTISWFI. At 137–1531 the chain is on the cytoplasmic side; sequence RYRFLNMYSR…RTLAPRRASI (1395 aa). 3 disordered regions span residues 242-265, 303-385, and 766-789; these read GSDEELNRMAGESSDEDDHRPDGR, ASSA…TRRK, and NTSSSRVSGSAAAANDPRRKKQSR. Residues 325–343 show a composition bias toward basic and acidic residues; the sequence is REMDDSPHVYQGDRLDPAS. Residues 689-809 and 849-969 each bind a nucleoside 3',5'-cyclic phosphate; these read GGTS…AVAS and RLTS…IAQR. Low complexity predominate over residues 768–779; that stretch reads SSSRVSGSAAAA. In terms of domain architecture, PNPLA spans 1228–1392; that stretch reads LVLGGGGARG…IDNLTVDHMK (165 aa). The GXGXXG motif lies at 1232-1237; the sequence is GGGARG. Residues 1259–1263 carry the GXSXG motif; the sequence is GTSIG. Ser-1261 (nucleophile) is an active-site residue. The active-site Proton acceptor is Asp-1379. The DGA/G motif lies at 1379 to 1381; the sequence is DGG. The tract at residues 1510-1531 is disordered; sequence LPEETEEKKKLQRTLAPRRASI.

Belongs to the NTE family.

It localises to the endoplasmic reticulum membrane. The enzyme catalyses a 1-acyl-sn-glycero-3-phosphocholine + H2O = sn-glycerol 3-phosphocholine + a fatty acid + H(+). Inhibited by organophosphorus esters. In terms of biological role, intracellular phospholipase B that catalyzes the double deacylation of phosphatidylcholine (PC) to glycerophosphocholine (GroPCho). Plays an important role in membrane lipid homeostasis. Responsible for the rapid PC turnover in response to inositol, elevated temperatures, or when choline is present in the growth medium. This Aspergillus niger (strain ATCC MYA-4892 / CBS 513.88 / FGSC A1513) protein is Lysophospholipase nte1 (nte1).